The chain runs to 575 residues: 3-hydroxy-3-methylglutaryl-coenzyme A reductase 1 (575 aa).

Basic residues predominate over residues 1–13 (MDTTGRLHHRKHA). The segment at 1–25 (MDTTGRLHHRKHATPVEDRSPTTPK) is disordered. 2 consecutive transmembrane segments (helical) span residues 29–49 (ALPL…FSVA) and 73–93 (EIVA…FFGI). The linker stretch occupies residues 97-160 (QSFIARASHD…PLIAPLVSEE (64 aa)). The N-linked (GlcNAc...) asparagine glycan is linked to asparagine 132. The interval 161–575 (DEMIVNSVVD…SSKDMSKAAS (415 aa)) is catalytic. The Charge relay system role is filled by glutamate 254. Asparagine 318 carries an N-linked (GlcNAc...) asparagine glycan. Residues lysine 386 and aspartate 462 each act as charge relay system in the active site. A helical membrane pass occupies residues 531–551 (LLAAIVAGSVLAGELSLMSAI). Histidine 560 acts as the Proton donor in catalysis. The N-linked (GlcNAc...) asparagine glycan is linked to asparagine 564.

This sequence belongs to the HMG-CoA reductase family.

Its subcellular location is the endoplasmic reticulum membrane. The protein localises to the mitochondrion membrane. The protein resides in the plastid membrane. It carries out the reaction (R)-mevalonate + 2 NADP(+) + CoA = (3S)-3-hydroxy-3-methylglutaryl-CoA + 2 NADPH + 2 H(+). It functions in the pathway metabolic intermediate biosynthesis; (R)-mevalonate biosynthesis; (R)-mevalonate from acetyl-CoA: step 3/3. In terms of biological role, catalyzes the synthesis of mevalonate. The specific precursor of all isoprenoid compounds present in plants. The sequence is that of 3-hydroxy-3-methylglutaryl-coenzyme A reductase 1 (HMGR1) from Hevea brasiliensis (Para rubber tree).